The primary structure comprises 434 residues: Sodium/bile acid cotransporter 5 (434 aa).

Positions 1-18 (MSGNFFIFLLLLVTPGEA) are cleaved as a signal peptide. Topologically, residues 19 to 129 (KKSFLSFLNI…VRVFRQTDDS (111 aa)) are extracellular. 2 N-linked (GlcNAc...) asparagine glycosylation sites follow: Asn-73 and Asn-96. A helical membrane pass occupies residues 130-150 (LLQAPIHVDSSIFLLVLSMIL). Residues 151–172 (LNKCAFGCKIEFQVLQTVWKRP) lie on the Cytoplasmic side of the membrane. A helical transmembrane segment spans residues 173 to 193 (LPILLGVVIQFFLMPFCGFLL). At 194–203 (SQILGLPKAQ) the chain is on the extracellular side. Residues 204–226 (AFGFVMTCTCPGGGGGYLFALLL) form a helical membrane-spanning segment. Over 227–232 (EGDVTL) the chain is Cytoplasmic. Residues 233–255 (AILMTCTSTSLALIMMPVNSYFY) traverse the membrane as a helical segment. Residues 256 to 268 (SRLLGLAGAFHVP) are Extracellular-facing. Residues 269–289 (VLKIVSTLLFILMPMSTGVII) form a helical membrane-spanning segment. The Cytoplasmic portion of the chain corresponds to 290-306 (KHKMPAKAICLERVVRP). The helical transmembrane segment at 307 to 327 (LSLTLMFVGIYLAFRMGLVFL) threads the bilayer. Residues 328–331 (RMAN) lie on the Extracellular side of the membrane. A helical membrane pass occupies residues 332-352 (LEVFLLGLLVPALGLLFGYSL). Topologically, residues 353–365 (AKVYLLPLPVCKT) are cytoplasmic. A helical transmembrane segment spans residues 366–386 (VALETGMLNSFLALAIIQLSF). The Extracellular segment spans residues 387–395 (SQPKAHEAS). The chain crosses the membrane as a helical span at residues 396-416 (VAPFTVAMCSSCEMLLLLLVY). Over 417-434 (KAKRRPSLSTEYEKTPLV) the chain is Cytoplasmic.

It belongs to the bile acid:sodium symporter (BASS) (TC 2.A.28) family.

It localises to the membrane. This Mus musculus (Mouse) protein is Sodium/bile acid cotransporter 5 (Slc10a5).